A 439-amino-acid polypeptide reads, in one-letter code: GTPase Der (439 aa).

EngA-type G domains are found at residues 4–168 (PIVA…KDDE) and 177–352 (INIA…DNYT). GTP contacts are provided by residues 10-17 (GRPNVGKS), 57-61 (DTGGI), 120-123 (NKID), 183-190 (GKPNVGKS), 230-234 (DTAGL), and 295-298 (NKWD). One can recognise a KH-like domain in the interval 353 to 437 (KRVKTGVLND…GIKLEFRERK (85 aa)).

It belongs to the TRAFAC class TrmE-Era-EngA-EngB-Septin-like GTPase superfamily. EngA (Der) GTPase family. In terms of assembly, associates with the 50S ribosomal subunit.

In terms of biological role, GTPase that plays an essential role in the late steps of ribosome biogenesis. This is GTPase Der from Clostridium botulinum (strain Okra / Type B1).